A 430-amino-acid chain; its full sequence is UDP-glucuronate 4-epimerase 3 (430 aa).

2 helical membrane-spanning segments follow: residues 29-49 and 90-110; these read SVAK…IFFY and GFSV…SAAL. Residue 92-123 coordinates NAD(+); it reads SVLVTGAAGFVGTHVSAALKRRGDGVLGLDNF. Tyr-242 acts as the Proton acceptor in catalysis.

The protein belongs to the NAD(P)-dependent epimerase/dehydratase family. Homodimer. In terms of tissue distribution, in roots, leaves, siliques, flowers, pollen and stems.

The protein resides in the golgi apparatus. The protein localises to the golgi stack membrane. The catalysed reaction is UDP-alpha-D-glucuronate = UDP-alpha-D-galacturonate. Functionally, involved in the synthesis of the negatively charged monosaccharide that forms the backbone of pectic cell wall components. In Arabidopsis thaliana (Mouse-ear cress), this protein is UDP-glucuronate 4-epimerase 3 (GAE3).